We begin with the raw amino-acid sequence, 589 residues long: Kelch-like protein 25 (589 aa).

The 69-residue stretch at 46-114 (TDMTLWAGNR…AYSSKIIINE (69 aa)) folds into the BTB domain. In terms of domain architecture, BACK spans 149–250 (CLGMMILSDA…LPSELLKEAV (102 aa)). Kelch repeat units lie at residues 296–340 (TLLI…AIGC), 341–388 (KVYI…ELDN), 389–444 (CLYV…SAKL), 446–492 (LFVF…VLGS), 494–538 (IFIM…ASGN), and 539–585 (KVYV…STWK).

As to quaternary structure, component of the BCR(KLHL25) E3 ubiquitin ligase complex, at least composed of cul3, klhl25 and rbx1.

Its pathway is protein modification; protein ubiquitination. Substrate-specific adapter of a BCR (BTB-CUL3-RBX1) E3 ubiquitin ligase complex involved in various processes, such as translation homeostasis and lipid synthesis. The BCR(KLHL25) ubiquitin ligase complex acts by mediating ubiquitination of hypophosphorylated eif4ebp1 (4E-BP1): ubiquitination and subsequent degradation of hypophosphorylated EIF4EBP1 (4E-BP1) probably serves as a homeostatic mechanism to maintain translation and prevent eIF4E inhibition when eIF4E levels are low. The BCR(KLHL25) complex also acts as a regulator of lipid synthesis by mediating ubiquitination and degradation of ACLY, thereby inhibiting lipid synthesis. This chain is Kelch-like protein 25, found in Xenopus laevis (African clawed frog).